The following is a 249-amino-acid chain: Undecaprenyl-diphosphatase (249 aa).

8 consecutive transmembrane segments (helical) span residues 11–31 (GLTEFLPISSSGHLAIFTAIF), 35–55 (PDVGYFAFLHLATFLAVLIFV), 80–100 (LVLSTIPAVIVGLCFGDFIES), 101–121 (VFSSTFLIGVFLSITGILMLL), 135–155 (IPYLDAMIVGIFQAFSVLPGI), 175–195 (AVKYSFLMGLPVTFGAGILEL), 202–222 (AEQLFGFVISFLTGLLGLYLV), and 226–246 (VIGGKLKIFGYYCFLASFFVL).

It belongs to the UppP family.

The protein resides in the cell membrane. The enzyme catalyses di-trans,octa-cis-undecaprenyl diphosphate + H2O = di-trans,octa-cis-undecaprenyl phosphate + phosphate + H(+). In terms of biological role, catalyzes the dephosphorylation of undecaprenyl diphosphate (UPP). In Methanococcus maripaludis (strain C5 / ATCC BAA-1333), this protein is Undecaprenyl-diphosphatase.